Here is a 246-residue protein sequence, read N- to C-terminus: Enolase-phosphatase E1 (246 aa).

The Mg(2+) site is built by aspartate 15 and glutamate 17. Substrate contacts are provided by residues serine 134–serine 135 and lysine 174. Mg(2+) is bound at residue aspartate 201.

This sequence belongs to the HAD-like hydrolase superfamily. MasA/MtnC family. Monomer. Mg(2+) is required as a cofactor.

The protein localises to the cytoplasm. It is found in the nucleus. The enzyme catalyses 5-methylsulfanyl-2,3-dioxopentyl phosphate + H2O = 1,2-dihydroxy-5-(methylsulfanyl)pent-1-en-3-one + phosphate. It functions in the pathway amino-acid biosynthesis; L-methionine biosynthesis via salvage pathway; L-methionine from S-methyl-5-thio-alpha-D-ribose 1-phosphate: step 3/6. It participates in amino-acid biosynthesis; L-methionine biosynthesis via salvage pathway; L-methionine from S-methyl-5-thio-alpha-D-ribose 1-phosphate: step 4/6. Bifunctional enzyme that catalyzes the enolization of 2,3-diketo-5-methylthiopentyl-1-phosphate (DK-MTP-1-P) into the intermediate 2-hydroxy-3-keto-5-methylthiopentenyl-1-phosphate (HK-MTPenyl-1-P), which is then dephosphorylated to form the acireductone 1,2-dihydroxy-3-keto-5-methylthiopentene (DHK-MTPene). In Debaryomyces hansenii (strain ATCC 36239 / CBS 767 / BCRC 21394 / JCM 1990 / NBRC 0083 / IGC 2968) (Yeast), this protein is Enolase-phosphatase E1.